The following is a 128-amino-acid chain: Large-conductance mechanosensitive channel (128 aa).

Helical transmembrane passes span 11 to 31 (FALK…AAFG) and 70 to 90 (GAFI…FIFV).

This sequence belongs to the MscL family. As to quaternary structure, homopentamer.

It localises to the cell membrane. Channel that opens in response to stretch forces in the membrane lipid bilayer. May participate in the regulation of osmotic pressure changes within the cell. This chain is Large-conductance mechanosensitive channel, found in Listeria monocytogenes serotype 4a (strain HCC23).